The primary structure comprises 210 residues: Thymidylate kinase (210 aa).

Position 11–18 (11–18 (GLEGAGKS)) interacts with ATP.

The protein belongs to the thymidylate kinase family.

It carries out the reaction dTMP + ATP = dTDP + ADP. In terms of biological role, phosphorylation of dTMP to form dTDP in both de novo and salvage pathways of dTTP synthesis. In Vibrio campbellii (strain ATCC BAA-1116), this protein is Thymidylate kinase.